The sequence spans 90 residues: MPNTSSASKRLRQNEKRRLLNRATRSNMRSTIRRVREAVENNDLETAKNEFKVAQKKLDRAAANNLIHKNAAARTKSRLNNLIKNAAQTA.

Positions 1 to 28 are disordered; sequence MPNTSSASKRLRQNEKRRLLNRATRSNM.

It belongs to the bacterial ribosomal protein bS20 family.

In terms of biological role, binds directly to 16S ribosomal RNA. This Rhodopirellula baltica (strain DSM 10527 / NCIMB 13988 / SH1) protein is Small ribosomal subunit protein bS20.